A 182-amino-acid chain; its full sequence is Pyruvate synthase subunit PorC (182 aa).

In terms of assembly, heterotetramer of one alpha, one beta, one delta and one gamma chain.

The enzyme catalyses 2 oxidized [2Fe-2S]-[ferredoxin] + pyruvate + CoA = 2 reduced [2Fe-2S]-[ferredoxin] + acetyl-CoA + CO2 + H(+). The polypeptide is Pyruvate synthase subunit PorC (porC) (Methanosarcina barkeri (strain Fusaro / DSM 804)).